Here is a 144-residue protein sequence, read N- to C-terminus: Snaclec 6 (144 aa).

An N-terminal signal peptide occupies residues 1 to 23 (MGRFISVSFGLLVVFLSLSGTGA). Cystine bridges form between Cys25/Cys36, Cys53/Cys142, and Cys119/Cys134. The C-type lectin domain occupies 32-143 (HEGHCYKVFK…CNFIAPVVCK (112 aa)).

Belongs to the snaclec family. As to quaternary structure, heterodimer; disulfide-linked.

It localises to the secreted. In terms of biological role, interferes with one step of hemostasis (modulation of platelet aggregation, or coagulation cascade, for example). In Daboia siamensis (Eastern Russel's viper), this protein is Snaclec 6.